We begin with the raw amino-acid sequence, 437 residues long: Adenylosuccinate lyase (437 aa).

N(6)-(1,2-dicarboxyethyl)-AMP-binding positions include 4–5 (RY), 70–72 (KHD), and 96–97 (TS). Histidine 144 (proton donor/acceptor) is an active-site residue. Glutamine 215 contributes to the N(6)-(1,2-dicarboxyethyl)-AMP binding site. The active-site Proton donor/acceptor is serine 265. N(6)-(1,2-dicarboxyethyl)-AMP-binding positions include serine 266, 271–273 (KKN), and 310–314 (SVERV).

Belongs to the lyase 1 family. Adenylosuccinate lyase subfamily. As to quaternary structure, homooligomer. Residues from neighboring subunits contribute catalytic and substrate-binding residues to each active site.

The catalysed reaction is N(6)-(1,2-dicarboxyethyl)-AMP = fumarate + AMP. It catalyses the reaction (2S)-2-[5-amino-1-(5-phospho-beta-D-ribosyl)imidazole-4-carboxamido]succinate = 5-amino-1-(5-phospho-beta-D-ribosyl)imidazole-4-carboxamide + fumarate. Its pathway is purine metabolism; AMP biosynthesis via de novo pathway; AMP from IMP: step 2/2. It participates in purine metabolism; IMP biosynthesis via de novo pathway; 5-amino-1-(5-phospho-D-ribosyl)imidazole-4-carboxamide from 5-amino-1-(5-phospho-D-ribosyl)imidazole-4-carboxylate: step 2/2. Its function is as follows. Catalyzes two reactions in de novo purine nucleotide biosynthesis. Catalyzes the breakdown of 5-aminoimidazole- (N-succinylocarboxamide) ribotide (SAICAR or 2-[5-amino-1-(5-phospho-beta-D-ribosyl)imidazole-4-carboxamido]succinate) to 5-aminoimidazole-4-carboxamide ribotide (AICAR or 5-amino-1-(5-phospho-beta-D-ribosyl)imidazole-4-carboxamide) and fumarate, and of adenylosuccinate (ADS or N(6)-(1,2-dicarboxyethyl)-AMP) to adenosine monophosphate (AMP) and fumarate. This Aquifex aeolicus (strain VF5) protein is Adenylosuccinate lyase (purB).